We begin with the raw amino-acid sequence, 778 residues long: DEK domain-containing chromatin-associated protein 4 (778 aa).

Disordered stretches follow at residues M1–R334 and L475–E689. Polar residues predominate over residues A14–A26. Composition is skewed to basic and acidic residues over residues E40 to D95, A121 to G153, E165 to N185, and T209 to K243. Residues K191–R300 adopt a coiled-coil conformation. Residues D244–D286 show a composition bias toward acidic residues. 2 stretches are compositionally biased toward basic and acidic residues: residues K287–K296 and G303–P323. A Nuclear localization signal 1 motif is present at residues D289–K296. Positions P489 to A496 match the Nuclear localization signal 2 motif. Low complexity predominate over residues K491–K502. A coiled-coil region spans residues D526–K587. Composition is skewed to acidic residues over residues D527–E553 and S560–E582. The Nuclear localization signal 3 motif lies at P618–R625. Residues A621–K631 are compositionally biased toward basic residues. The span at K678–E689 shows a compositional bias: basic and acidic residues. One can recognise a DEK-C domain in the interval E685–T740. 2 consecutive DNA-binding regions follow at residues D703 to D717 and K732 to Q736. Residues K732–K766 adopt a coiled-coil conformation. The interval K741–A778 is disordered. The span at E745 to E763 shows a compositional bias: acidic residues. Residues K764–A778 are compositionally biased toward basic and acidic residues.

Interacts with DEK3.

The protein localises to the nucleus. The protein resides in the nucleolus. Its function is as follows. Chromatin-associated protein which contributes to the modulation of chromatin structure (such as super-helical structure of DNA) and function. Binds to chromatin of protein-coding genes throughout the genome to regulate nucleosome occupancy and chromatin accessibility, and to modulate the expression of target genes. The protein is DEK domain-containing chromatin-associated protein 4 of Arabidopsis thaliana (Mouse-ear cress).